The sequence spans 313 residues: Protoheme IX farnesyltransferase (313 aa).

The next 8 membrane-spanning stretches (helical) occupy residues 34 to 54, 56 to 76, 105 to 125, 128 to 148, 152 to 172, 173 to 193, 243 to 263, and 291 to 311; these read VIELLLVTTIPAMLLADRGTV, PLLILNTLVGGLLAAAGANTL, HALIFGLALSVLSFFWLWWTT, LSAHLAGATIAFYVLIYTLVL, TSQNVVWGGAAGCMPVMIGWS, AVTGTIQWPALVMFLIIFFWT, LALATGWLYAAVAIVAGTWFL, and YLAVVFCALAVDSALALPTLF.

This sequence belongs to the UbiA prenyltransferase family. Protoheme IX farnesyltransferase subfamily.

It is found in the cell membrane. It carries out the reaction heme b + (2E,6E)-farnesyl diphosphate + H2O = Fe(II)-heme o + diphosphate. The protein operates within porphyrin-containing compound metabolism; heme O biosynthesis; heme O from protoheme: step 1/1. Its function is as follows. Converts heme B (protoheme IX) to heme O by substitution of the vinyl group on carbon 2 of heme B porphyrin ring with a hydroxyethyl farnesyl side group. This is Protoheme IX farnesyltransferase from Mycolicibacterium vanbaalenii (strain DSM 7251 / JCM 13017 / BCRC 16820 / KCTC 9966 / NRRL B-24157 / PYR-1) (Mycobacterium vanbaalenii).